Reading from the N-terminus, the 244-residue chain is UDP-2,3-diacylglucosamine hydrolase (244 aa).

5 residues coordinate Mn(2+): Asp-8, His-10, Asp-41, Asn-79, and His-114. 79 to 80 (NR) contributes to the substrate binding site. Positions 122, 160, 164, 167, and 195 each coordinate substrate. Residues His-195 and His-197 each coordinate Mn(2+).

It belongs to the LpxH family. Requires Mn(2+) as cofactor.

It is found in the cell inner membrane. The enzyme catalyses UDP-2-N,3-O-bis[(3R)-3-hydroxytetradecanoyl]-alpha-D-glucosamine + H2O = 2-N,3-O-bis[(3R)-3-hydroxytetradecanoyl]-alpha-D-glucosaminyl 1-phosphate + UMP + 2 H(+). Its pathway is glycolipid biosynthesis; lipid IV(A) biosynthesis; lipid IV(A) from (3R)-3-hydroxytetradecanoyl-[acyl-carrier-protein] and UDP-N-acetyl-alpha-D-glucosamine: step 4/6. Functionally, hydrolyzes the pyrophosphate bond of UDP-2,3-diacylglucosamine to yield 2,3-diacylglucosamine 1-phosphate (lipid X) and UMP by catalyzing the attack of water at the alpha-P atom. Involved in the biosynthesis of lipid A, a phosphorylated glycolipid that anchors the lipopolysaccharide to the outer membrane of the cell. This chain is UDP-2,3-diacylglucosamine hydrolase, found in Marinobacter nauticus (strain ATCC 700491 / DSM 11845 / VT8) (Marinobacter aquaeolei).